We begin with the raw amino-acid sequence, 275 residues long: Taurine transport system permease protein TauC (275 aa).

The next 7 helical transmembrane spans lie at 20–42 (LSRQVTLSIGTLAVLLTVWWTVA), 87–107 (IMLALFAAVLFGIPVGIAMGL), 124–144 (PVPPLAYLPLMVIWFGIGETS), 146–166 (ILLIYLAIFAPVAMSALAGVK), 186–206 (VLWFVILPGALPEILTGLRIG), 209–229 (VGWSTLVAAELIAATRGLGFM), and 236–256 (FLATDVVLAGIAVIAIIAFLL). One can recognise an ABC transmembrane type-1 domain in the interval 80 to 264 (LAASLTRIML…LLELGLRALQ (185 aa)).

The protein belongs to the binding-protein-dependent transport system permease family. CysTW subfamily.

It is found in the cell inner membrane. Functionally, part of a binding-protein-dependent transport system for taurine. Probably responsible for the translocation of the substrate across the membrane. The polypeptide is Taurine transport system permease protein TauC (tauC) (Escherichia coli (strain K12)).